The primary structure comprises 303 residues: Tumor necrosis factor receptor type 1-associated DEATH domain protein (303 aa).

Residues 141-157 carry the Nuclear export signal motif; sequence QKDDELAEIDERLKSIK. In terms of domain architecture, Death spans 208 to 298; sequence TSAHIQHFAK…SIALDLLSLN (91 aa). A Nuclear localization signal motif is present at residues 224-237; sequence KPVGRSLGKTCRAL.

In terms of assembly, heterodimer with tnfrsf1a.

Its subcellular location is the nucleus. The protein resides in the cytoplasm. It is found in the cytoskeleton. In terms of biological role, adapter molecule for tnfrsf1a that specifically associates with the cytoplasmic domain of activated tnfrsf1a mediating its interaction with fadd. In Xenopus laevis (African clawed frog), this protein is Tumor necrosis factor receptor type 1-associated DEATH domain protein.